The sequence spans 80 residues: ATP synthase F(1) complex subunit delta, mitochondrial (80 aa).

A mitochondrion-targeting transit peptide spans 1–22; the sequence is MLPATLLRXSGLGRVVRQARAY.

The protein belongs to the ATPase epsilon chain family. Component of the ATP synthase complex composed at least of ATP5F1A/subunit alpha, ATP5F1B/subunit beta, ATP5MC1/subunit c (homooctomer), MT-ATP6/subunit a, MT-ATP8/subunit 8, ATP5ME/subunit e, ATP5MF/subunit f, ATP5MG/subunit g, ATP5MK/subunit k, ATP5MJ/subunit j, ATP5F1C/subunit gamma, ATP5F1D/subunit delta, ATP5F1E/subunit epsilon, ATP5PF/subunit F6, ATP5PB/subunit b, ATP5PD/subunit d, ATP5PO/subunit OSCP. ATP synthase complex consists of a soluble F(1) head domain (subunits alpha(3) and beta(3)) - the catalytic core - and a membrane F(0) domain - the membrane proton channel (subunits c, a, 8, e, f, g, k and j). These two domains are linked by a central stalk (subunits gamma, delta, and epsilon) rotating inside the F1 region and a stationary peripheral stalk (subunits F6, b, d, and OSCP). Component of a complex composed at least by ATPIF1, ATP5F1A, ATP5F1B, ATP5F1C AND ATP5F1E.

It is found in the mitochondrion. The protein localises to the mitochondrion inner membrane. Functionally, subunit delta, of the mitochondrial membrane ATP synthase complex (F(1)F(0) ATP synthase or Complex V) that produces ATP from ADP in the presence of a proton gradient across the membrane which is generated by electron transport complexes of the respiratory chain. ATP synthase complex consist of a soluble F(1) head domain - the catalytic core - and a membrane F(1) domain - the membrane proton channel. These two domains are linked by a central stalk rotating inside the F(1) region and a stationary peripheral stalk. During catalysis, ATP synthesis in the catalytic domain of F(1) is coupled via a rotary mechanism of the central stalk subunits to proton translocation. In vivo, can only synthesize ATP although its ATP hydrolase activity can be activated artificially in vitro. With the central stalk subunit gamma, is essential for the biogenesis of F(1) catalytic part of the ATP synthase complex namely in the formation of F1 assembly intermediate. In Sus scrofa (Pig), this protein is ATP synthase F(1) complex subunit delta, mitochondrial.